A 702-amino-acid polypeptide reads, in one-letter code: Polyribonucleotide nucleotidyltransferase (702 aa).

Mg(2+) is bound by residues Asp485 and Asp491. The KH domain maps to 552–612; it reads PRTEIICIDP…EGVKKAISII (61 aa). The region spanning 622 to 690 is the S1 motif domain; that stretch reads GEIYLGKVTK…NQGRINLSRK (69 aa).

Belongs to the polyribonucleotide nucleotidyltransferase family. Mg(2+) serves as cofactor.

Its subcellular location is the cytoplasm. The enzyme catalyses RNA(n+1) + phosphate = RNA(n) + a ribonucleoside 5'-diphosphate. Its function is as follows. Involved in mRNA degradation. Catalyzes the phosphorolysis of single-stranded polyribonucleotides processively in the 3'- to 5'-direction. This chain is Polyribonucleotide nucleotidyltransferase, found in Clostridium botulinum (strain ATCC 19397 / Type A).